A 287-amino-acid polypeptide reads, in one-letter code: 26S proteasome non-ATPase regulatory subunit 8 (287 aa).

Ser43 is subject to Phosphoserine. The 170-residue stretch at 99–268 (PSFERYMAQL…QQKPEDTTIP (170 aa)) folds into the PCI domain. Lys234 is covalently cross-linked (Glycyl lysine isopeptide (Lys-Gly) (interchain with G-Cter in SUMO2)).

Belongs to the proteasome subunit S14 family. Component of the 19S proteasome regulatory particle complex. The 26S proteasome consists of a 20S core particle (CP) and two 19S regulatory subunits (RP). The regulatory particle is made of a lid composed of 9 subunits including PSMD8, a base containing 6 ATPases and few additional components. Interacts with DDI2. Interacts with TASOR.

Its function is as follows. Component of the 26S proteasome, a multiprotein complex involved in the ATP-dependent degradation of ubiquitinated proteins. This complex plays a key role in the maintenance of protein homeostasis by removing misfolded or damaged proteins, which could impair cellular functions, and by removing proteins whose functions are no longer required. Therefore, the proteasome participates in numerous cellular processes, including cell cycle progression, apoptosis, or DNA damage repair. The chain is 26S proteasome non-ATPase regulatory subunit 8 (PSMD8) from Bos taurus (Bovine).